We begin with the raw amino-acid sequence, 187 residues long: Putative lipoprotein LppJ (187 aa).

A signal peptide spans 1-28 (MPHSTADRRLRLTRQALLAAAVAPLLAG). Cysteine 29 carries the N-palmitoyl cysteine lipid modification. The S-diacylglycerol cysteine moiety is linked to residue cysteine 29.

It localises to the cell membrane. This is Putative lipoprotein LppJ (lppJ) from Mycobacterium bovis (strain ATCC BAA-935 / AF2122/97).